The sequence spans 192 residues: Fe/S biogenesis protein NfuA (192 aa).

Positions 149 and 152 each coordinate [4Fe-4S] cluster.

It belongs to the NfuA family. As to quaternary structure, homodimer. [4Fe-4S] cluster is required as a cofactor.

Its function is as follows. Involved in iron-sulfur cluster biogenesis. Binds a 4Fe-4S cluster, can transfer this cluster to apoproteins, and thereby intervenes in the maturation of Fe/S proteins. Could also act as a scaffold/chaperone for damaged Fe/S proteins. The protein is Fe/S biogenesis protein NfuA of Shewanella baltica (strain OS223).